Consider the following 704-residue polypeptide: Polyribonucleotide nucleotidyltransferase (704 aa).

Residues Asp-485 and Asp-491 each contribute to the Mg(2+) site. The KH domain occupies 552–611 (PKILTMTINPDKIRDVIGPSGKMINKIIEDTGVKIDIEQDGTIYISSADTNMNNKAREII). The region spanning 621 to 689 (GQMYLGTVKR…NQGRVNLSRK (69 aa)) is the S1 motif domain.

Belongs to the polyribonucleotide nucleotidyltransferase family. Requires Mg(2+) as cofactor.

Its subcellular location is the cytoplasm. It carries out the reaction RNA(n+1) + phosphate = RNA(n) + a ribonucleoside 5'-diphosphate. Functionally, involved in mRNA degradation. Catalyzes the phosphorolysis of single-stranded polyribonucleotides processively in the 3'- to 5'-direction. The polypeptide is Polyribonucleotide nucleotidyltransferase (Halalkalibacterium halodurans (strain ATCC BAA-125 / DSM 18197 / FERM 7344 / JCM 9153 / C-125) (Bacillus halodurans)).